The primary structure comprises 320 residues: 4-diphosphocytidyl-2-C-methyl-D-erythritol kinase (320 aa).

The active site involves Lys20. 112-122 (PVAGGMGGGSA) is a binding site for ATP. The active site involves Asp154.

The protein belongs to the GHMP kinase family. IspE subfamily.

The catalysed reaction is 4-CDP-2-C-methyl-D-erythritol + ATP = 4-CDP-2-C-methyl-D-erythritol 2-phosphate + ADP + H(+). Its pathway is isoprenoid biosynthesis; isopentenyl diphosphate biosynthesis via DXP pathway; isopentenyl diphosphate from 1-deoxy-D-xylulose 5-phosphate: step 3/6. Its function is as follows. Catalyzes the phosphorylation of the position 2 hydroxy group of 4-diphosphocytidyl-2C-methyl-D-erythritol. In Pseudarthrobacter chlorophenolicus (strain ATCC 700700 / DSM 12829 / CIP 107037 / JCM 12360 / KCTC 9906 / NCIMB 13794 / A6) (Arthrobacter chlorophenolicus), this protein is 4-diphosphocytidyl-2-C-methyl-D-erythritol kinase.